A 410-amino-acid polypeptide reads, in one-letter code: Elongation factor Tu, chloroplastic (410 aa).

Positions 10-214 constitute a tr-type G domain; the sequence is KPHVNIGTIG…NVDEYIPTPE (205 aa). The segment at 19-26 is G1; the sequence is GHVDHGKT. 19–26 provides a ligand contact to GTP; the sequence is GHVDHGKT. Thr26 contacts Mg(2+). The tract at residues 60 to 64 is G2; the sequence is GITIN. Residues 81-84 are G3; sequence DCPG. GTP is bound by residues 81–85 and 136–139; these read DCPGH and NKED. The segment at 136-139 is G4; the sequence is NKED. Positions 174–176 are G5; it reads SAL.

It belongs to the TRAFAC class translation factor GTPase superfamily. Classic translation factor GTPase family. EF-Tu/EF-1A subfamily.

It is found in the plastid. It localises to the chloroplast stroma. The enzyme catalyses GTP + H2O = GDP + phosphate + H(+). In terms of biological role, GTP hydrolase that promotes the GTP-dependent binding of aminoacyl-tRNA to the A-site of ribosomes during protein biosynthesis. The polypeptide is Elongation factor Tu, chloroplastic (tufA) (Bigelowiella natans (Pedinomonas minutissima)).